The following is a 1001-amino-acid chain: MPSTNRAGSLKDPEIAELFFKEDPEKLFTDLREIGHGSFGAVYFARDVRTNEVVAIKKMSYSGKQSTEKWQDIIKEVKFLQRIKHPNSIEYKGCYLREHTAWLVMEYCLGSASDLLEVHKKPLQEVEIAAITHGALQGLAYLHSHTMIHRDIKAGNILLTEPGQVKLADFGSASMASPANSFVGTPYWMAPEVILAMDEGQYDGKVDVWSLGITCIELAERKPPLFNMNAMSALYHIAQNESPTLQSNEWSDYFRNFVDSCLQKIPQDRPTSEELLKHIFVLRERPETVLIDLIQRTKDAVRELDNLQYRKMKKLLFQEAHNGPAVEAQEEEEEQDHGVGRTGTVNSVGSNQSIPSMSISASSQSSSVNSLPDVSDDKSELDMMEGDHTVMSNSSVIHLKPEEENYREEGDPRTRASDPQSPPQVSRHKSHYRNREHFATIRTASLVTRQMQEHEQDSELREQMSGYKRMRRQHQKQLMTLENKLKAEMDEHRLRLDKDLETQRNNFAAEMEKLIKKHQAAMEKEAKVMSNEEKKFQQHIQAQQKKELNSFLESQKREYKLRKEQLKEELNENQSTPKKEKQEWLSKQKENIQHFQAEEEANLLRRQRQYLELECRRFKRRMLLGRHNLEQDLVREELNKRQTQKDLEHAMLLRQHESMQELEFRHLNTIQKMRCELIRLQHQTELTNQLEYNKRRERELRRKHVMEVRQQPKSLKSKELQIKKQFQDTCKIQTRQYKALRNHLLETTPKSEHKAVLKRLKEEQTRKLAILAEQYDHSINEMLSTQALRLDEAQEAECQVLKMQLQQELELLNAYQSKIKMQAEAQHDRELRELEQRVSLRRALLEQKIEEEMLALQNERTERIRSLLERQAREIEAFDSESMRLGFSNMVLSNLSPEAFSHSYPGASGWSHNPTGGPGPHWGHPMGGPPQAWGHPMQGGPQPWGHPSGPMQGVPRGSSMGVRNSPQALRRTASGGRTEQGMSRSTSVTSQISNGSHMSYT.

A Phosphoserine modification is found at serine 9. The Protein kinase domain occupies 28–281; the sequence is FTDLREIGHG…SEELLKHIFV (254 aa). Residues 34–42 and lysine 57 contribute to the ATP site; that span reads IGHGSFGAV. Aspartate 151 acts as the Proton acceptor in catalysis. Positions 324-433 are disordered; it reads PAVEAQEEEE…QVSRHKSHYR (110 aa). A compositionally biased stretch (low complexity) spans 350 to 373; the sequence is SNQSIPSMSISASSQSSSVNSLPD. Composition is skewed to basic and acidic residues over residues 375–388 and 399–416; these read SDDKSELDMMEGDH and LKPEEENYREEGDPRTRA. Phosphoserine occurs at positions 421 and 445. Residues 458 to 651 adopt a coiled-coil conformation; it reads SELREQMSGY…QTQKDLEHAM (194 aa). The disordered stretch occupies residues 567–587; that stretch reads KEELNENQSTPKKEKQEWLSK. The span at 577–587 shows a compositional bias: basic and acidic residues; the sequence is PKKEKQEWLSK. Threonine 669 is subject to Phosphothreonine. The stretch at 754–877 forms a coiled coil; that stretch reads KAVLKRLKEE…LERQAREIEA (124 aa). The interval 911–1001 is disordered; that stretch reads SHNPTGGPGP…ISNGSHMSYT (91 aa). Position 965 is a phosphoserine (serine 965). A compositionally biased stretch (polar residues) spans 975 to 1001; it reads GGRTEQGMSRSTSVTSQISNGSHMSYT.

Belongs to the protein kinase superfamily. STE Ser/Thr protein kinase family. STE20 subfamily. As to quaternary structure, self-associates. Interacts with MAP2K3. Interacts with SPRED1. Interacts with TESK1; the interaction inhibits TAOK1 kinase activity. Interacts with MAP3K7. Post-translationally, proteolytically processed by caspase-3 (CASP3). In terms of processing, autophosphorylated. Phosphorylated by ATM in response to DNA damage. Phosphorylated by LRRK2. Highly expressed in the testis, and to a lower extent also expressed in brain, placenta, colon and skeletal muscle.

It is found in the cytoplasm. It carries out the reaction L-seryl-[protein] + ATP = O-phospho-L-seryl-[protein] + ADP + H(+). The catalysed reaction is L-threonyl-[protein] + ATP = O-phospho-L-threonyl-[protein] + ADP + H(+). With respect to regulation, serine/threonine-protein kinase activity is inhibited by SPRED1. Functionally, serine/threonine-protein kinase involved in various processes such as p38/MAPK14 stress-activated MAPK cascade, DNA damage response and regulation of cytoskeleton stability. Phosphorylates MAP2K3, MAP2K6 and MARK2. Acts as an activator of the p38/MAPK14 stress-activated MAPK cascade by mediating phosphorylation and subsequent activation of the upstream MAP2K3 and MAP2K6 kinases. Involved in G-protein coupled receptor signaling to p38/MAPK14. In response to DNA damage, involved in the G2/M transition DNA damage checkpoint by activating the p38/MAPK14 stress-activated MAPK cascade, probably by mediating phosphorylation of MAP2K3 and MAP2K6. Acts as a regulator of cytoskeleton stability by phosphorylating 'Thr-208' of MARK2, leading to activate MARK2 kinase activity and subsequent phosphorylation and detachment of MAPT/TAU from microtubules. Also acts as a regulator of apoptosis: regulates apoptotic morphological changes, including cell contraction, membrane blebbing and apoptotic bodies formation via activation of the MAPK8/JNK cascade. Plays an essential role in the regulation of neuronal development in the central nervous system. Also plays a role in the regulation of neuronal migration to the cortical plate. The polypeptide is Serine/threonine-protein kinase TAO1 (TAOK1) (Homo sapiens (Human)).